A 71-amino-acid chain; its full sequence is UPF0346 protein SP70585_0986 (71 aa).

Belongs to the UPF0346 family.

The chain is UPF0346 protein SP70585_0986 from Streptococcus pneumoniae (strain 70585).